The primary structure comprises 634 residues: Chaperone protein HtpG (634 aa).

The tract at residues 1 to 342 (MTVETQKETL…SNDLSLNVSR (342 aa)) is a; substrate-binding. Residues 343–559 (EILQKDPIID…EQDLGLQMRQ (217 aa)) are b. The interval 560–634 (ILEASGQKVP…LNKLLVELSA (75 aa)) is c.

The protein belongs to the heat shock protein 90 family. As to quaternary structure, homodimer.

The protein resides in the cytoplasm. Functionally, molecular chaperone. Has ATPase activity. This Pseudomonas putida (strain ATCC 47054 / DSM 6125 / CFBP 8728 / NCIMB 11950 / KT2440) protein is Chaperone protein HtpG.